A 211-amino-acid chain; its full sequence is Protein N-terminal glutamine amidohydrolase (211 aa).

Residues Cys24, His78, and Asp94 contribute to the active site.

It belongs to the NTAQ1 family. As to quaternary structure, monomer.

It carries out the reaction N-terminal L-glutaminyl-[protein] + H2O = N-terminal L-glutamyl-[protein] + NH4(+). Functionally, mediates the side-chain deamidation of N-terminal glutamine residues to glutamate, an important step in N-end rule pathway of protein degradation. Conversion of the resulting N-terminal glutamine to glutamate renders the protein susceptible to arginylation, polyubiquitination and degradation as specified by the N-end rule. Does not act on substrates with internal or C-terminal glutamine and does not act on non-glutamine residues in any position. The sequence is that of Protein N-terminal glutamine amidohydrolase (tun) from Anopheles gambiae (African malaria mosquito).